We begin with the raw amino-acid sequence, 290 residues long: 33 kDa chaperonin (290 aa).

Cystine bridges form between Cys235-Cys237 and Cys268-Cys271.

Belongs to the HSP33 family. In terms of processing, under oxidizing conditions two disulfide bonds are formed involving the reactive cysteines. Under reducing conditions zinc is bound to the reactive cysteines and the protein is inactive.

It localises to the cytoplasm. Redox regulated molecular chaperone. Protects both thermally unfolding and oxidatively damaged proteins from irreversible aggregation. Plays an important role in the bacterial defense system toward oxidative stress. This is 33 kDa chaperonin from Streptococcus pyogenes serotype M49.